Reading from the N-terminus, the 125-residue chain is uncharacterized protein (125 aa).

A disordered region spans residues 36 to 57; the sequence is EAKKAKEKQDSKTKDTDKKVDQ. The chain crosses the membrane as a helical span at residues 92-112; it reads ITIFLLIVLVSAIMIGIYFGI.

The protein localises to the membrane. This is an uncharacterized protein from Mycoplasma pneumoniae (strain ATCC 29342 / M129 / Subtype 1) (Mycoplasmoides pneumoniae).